Consider the following 693-residue polypeptide: Elongation factor G (693 aa).

The 276-residue stretch at 8 to 283 (PQQRNIGIMA…AVVEYLPSPV (276 aa)) folds into the tr-type G domain. Residues 17–24 (AHIDAGKT), 81–85 (DTPGH), and 135–138 (NKMD) each bind GTP.

This sequence belongs to the TRAFAC class translation factor GTPase superfamily. Classic translation factor GTPase family. EF-G/EF-2 subfamily.

Its subcellular location is the cytoplasm. Catalyzes the GTP-dependent ribosomal translocation step during translation elongation. During this step, the ribosome changes from the pre-translocational (PRE) to the post-translocational (POST) state as the newly formed A-site-bound peptidyl-tRNA and P-site-bound deacylated tRNA move to the P and E sites, respectively. Catalyzes the coordinated movement of the two tRNA molecules, the mRNA and conformational changes in the ribosome. This chain is Elongation factor G, found in Oleidesulfovibrio alaskensis (strain ATCC BAA-1058 / DSM 17464 / G20) (Desulfovibrio alaskensis).